We begin with the raw amino-acid sequence, 258 residues long: Deoxyribose-phosphate aldolase (258 aa).

D101 acts as the Proton donor/acceptor in catalysis. K166 (schiff-base intermediate with acetaldehyde) is an active-site residue. K200 serves as the catalytic Proton donor/acceptor.

Belongs to the DeoC/FbaB aldolase family. DeoC type 2 subfamily.

The protein resides in the cytoplasm. It catalyses the reaction 2-deoxy-D-ribose 5-phosphate = D-glyceraldehyde 3-phosphate + acetaldehyde. It functions in the pathway carbohydrate degradation; 2-deoxy-D-ribose 1-phosphate degradation; D-glyceraldehyde 3-phosphate and acetaldehyde from 2-deoxy-alpha-D-ribose 1-phosphate: step 2/2. Catalyzes a reversible aldol reaction between acetaldehyde and D-glyceraldehyde 3-phosphate to generate 2-deoxy-D-ribose 5-phosphate. This chain is Deoxyribose-phosphate aldolase, found in Actinobacillus pleuropneumoniae serotype 7 (strain AP76).